The sequence spans 146 residues: Hemoglobin subunit beta (146 aa).

Residues 2 to 146 (FLTAEEKGLV…VASALAHRYH (145 aa)) form the Globin domain. Phosphoserine is present on S44. K59 carries the N6-acetyllysine modification. H63 lines the heme b pocket. An N6-acetyllysine modification is found at K82. H92 lines the heme b pocket. The residue at position 93 (C93) is an S-nitrosocysteine.

This sequence belongs to the globin family. Heterotetramer of two alpha chains and two beta chains. As to expression, red blood cells.

In terms of biological role, involved in oxygen transport from the lung to the various peripheral tissues. This Paguma larvata (Masked palm civet) protein is Hemoglobin subunit beta (HBB).